Here is a 469-residue protein sequence, read N- to C-terminus: Putative dipeptidase SAUSA300_1697 (469 aa).

His84 is a binding site for Zn(2+). The active site involves Asp86. Asp115 is a Zn(2+) binding site. Glu149 functions as the Proton acceptor in the catalytic mechanism. Positions 150, 173, and 440 each coordinate Zn(2+).

It belongs to the peptidase M20A family. Zn(2+) serves as cofactor.

The polypeptide is Putative dipeptidase SAUSA300_1697 (Staphylococcus aureus (strain USA300)).